A 486-amino-acid chain; its full sequence is MRKVYIFDTTLRDGEQTPGVSLTVEEKVEIAKQLAKLNVDVIEAGFPIASEGEFKAVKKIATEVEDPTIAALARAVEKDIDRAGEALRNAEKNRIHTFIATSPIHMKYKLRKEPEEVKKLAVKAVEHATKYTEDVEFSAEDATRSDWDFLVEVYEAVIDAGATVINVPDTVGYATPEEFYELVRYLRRNISNIKGVQISVHCHDDLGLAVANSLSAIRAGADQVEVTVNGIGERAGNAALEEVIVALDVRRDFYKVKTDVNLKEIARTSKLVSHLTGIEVPPNKAIVGGNAFAHESGIHQDGVLKERTTYEIIDPKKLGFSGSKIVLGKHSGRHAFRKKLEELGYSLTEEHLERAFKKFKDIADRKRWITDTDIEAIIQEELTKSNGKLKVEIIHVTSGKVSTATVRISMNGEERIEVAWFKNGPIDALFSAINKALGEEFKLREYRVSSVTSGKDSLGEVLVRVEVNGEIFVGRGLSTDIIEASA.

Residues 4-266 (VYIFDTTLRD…KTDVNLKEIA (263 aa)) enclose the Pyruvate carboxyltransferase domain. D13, H201, H203, and N237 together coordinate Mn(2+). The segment at 390-486 (KVEIIHVTSG…LSTDIIEASA (97 aa)) is regulatory domain.

This sequence belongs to the alpha-IPM synthase/homocitrate synthase family. LeuA type 1 subfamily. The cofactor is Mn(2+).

It localises to the cytoplasm. It carries out the reaction 3-methyl-2-oxobutanoate + acetyl-CoA + H2O = (2S)-2-isopropylmalate + CoA + H(+). It functions in the pathway amino-acid biosynthesis; L-leucine biosynthesis; L-leucine from 3-methyl-2-oxobutanoate: step 1/4. Its function is as follows. Catalyzes the condensation of the acetyl group of acetyl-CoA with 3-methyl-2-oxobutanoate (2-ketoisovalerate) to form 3-carboxy-3-hydroxy-4-methylpentanoate (2-isopropylmalate). The sequence is that of 2-isopropylmalate synthase from Pyrococcus abyssi (strain GE5 / Orsay).